The chain runs to 350 residues: Probable sugar phosphate/phosphate translocator At4g32390 (350 aa).

10 consecutive transmembrane segments (helical) span residues 15–35 (ILLS…VIVY), 49–69 (FPIT…VILI), 89–109 (VVPI…AYIY), 112–132 (VSFI…IGVL), 146–166 (MLSI…FDTW), 168–188 (VMLQ…IQIL), 205–225 (VAPC…LPIL), 235–255 (FVIF…VFLL), 263–283 (TMNV…WSVI), and 286–306 (TVTP…AYYN). An EamA domain is found at 38-155 (YILDKKMYNW…MLSISFGVAI (118 aa)). The interval 324–350 (QGDEEEAGKLLEERESEAAAKRNETED) is disordered.

This sequence belongs to the TPT transporter family. TPT (TC 2.A.7.9) subfamily.

The protein localises to the membrane. The protein is Probable sugar phosphate/phosphate translocator At4g32390 of Arabidopsis thaliana (Mouse-ear cress).